Reading from the N-terminus, the 924-residue chain is Periplasmic nitrate reductase (924 aa).

A signal peptide (tat-type signal) is located at residues 1–30; it reads MNRRDFIKNTAIASAASVAGLSVPSSMLGA. Residues 35 to 91 form the 4Fe-4S Mo/W bis-MGD-type domain; sequence WKWDKAVCRFCGTGCGIMIARKDGKIVATKGDPAAPVNRGLNCIKGYFNAKIMYGED. Residues Cys-42, Cys-45, Cys-49, and Cys-77 each contribute to the [4Fe-4S] cluster site. Mo-bis(molybdopterin guanine dinucleotide) is bound by residues Lys-79, Gln-147, Asn-172, Cys-176, 209–216, Met-417, Gln-421, Asn-527, 552–553, Lys-575, Asp-602, and 814–823; these read WGANMAEM, SD, and TGRVLEHWHS. Trp-890 contacts substrate. Asn-898 and Lys-915 together coordinate Mo-bis(molybdopterin guanine dinucleotide).

The protein belongs to the prokaryotic molybdopterin-containing oxidoreductase family. NasA/NapA/NarB subfamily. Component of the periplasmic nitrate reductase NapAB complex composed of NapA and NapB. [4Fe-4S] cluster is required as a cofactor. Mo-bis(molybdopterin guanine dinucleotide) serves as cofactor. Predicted to be exported by the Tat system. The position of the signal peptide cleavage has not been experimentally proven.

It is found in the periplasm. The catalysed reaction is 2 Fe(II)-[cytochrome] + nitrate + 2 H(+) = 2 Fe(III)-[cytochrome] + nitrite + H2O. Its function is as follows. Catalytic subunit of the periplasmic nitrate reductase complex NapAB. Receives electrons from NapB and catalyzes the reduction of nitrate to nitrite. The sequence is that of Periplasmic nitrate reductase from Campylobacter jejuni subsp. jejuni serotype O:2 (strain ATCC 700819 / NCTC 11168).